A 909-amino-acid chain; its full sequence is Lon protease homolog 2, peroxisomal (909 aa).

One can recognise a Lon N-terminal domain in the interval M1–V230. The segment at F249–G269 is disordered. Residue G463–T470 coordinates ATP. The Lon proteolytic domain maps to T706–D893. Active-site residues include S799 and K842. The short motif at S907 to L909 is the Microbody targeting signal element.

The protein belongs to the peptidase S16 family.

The protein localises to the peroxisome matrix. It is found in the cytoplasm. It carries out the reaction Hydrolysis of proteins in presence of ATP.. ATP-dependent serine protease that mediates the selective degradation of misfolded and unassembled polypeptides in the peroxisomal matrix. Necessary for type 2 peroxisome targeting signal (PTS2)-containing protein processing and facilitates peroxisome matrix protein import. The chain is Lon protease homolog 2, peroxisomal from Sordaria macrospora (strain ATCC MYA-333 / DSM 997 / K(L3346) / K-hell).